The primary structure comprises 79 residues: Reactive oxygen species modulator 1 (79 aa).

A helical membrane pass occupies residues 22 to 44 (GFVMGCAVGMAAGALFGTFSCLR). A sufficient for antibacterial activity region spans residues 42 to 60 (CLRIGMRGRELMGGIGKTM).

The protein belongs to the MGR2 family.

Its subcellular location is the mitochondrion inner membrane. Functionally, has antibacterial activity against a variety of bacteria including S.aureus, P.aeruginosa and M.tuberculosis. Acts by inducing bacterial membrane breakage. Its function is as follows. Induces production of reactive oxygen species (ROS) which are necessary for cell proliferation. May play a role in inducing oxidative DNA damage and replicative senescence. May play a role in the coordination of mitochondrial morphology and cell proliferation. This is Reactive oxygen species modulator 1 (ROMO1) from Bos taurus (Bovine).